A 259-amino-acid polypeptide reads, in one-letter code: Polycomb group RING finger protein 1 (259 aa).

Ala2 carries the N-acetylalanine modification. Ser3 carries the phosphoserine modification. Lys24 participates in a covalent cross-link: Glycyl lysine isopeptide (Lys-Gly) (interchain with G-Cter in SUMO2). Residues 47-86 (CCLCAGYFVDATTITECLHTFCKSCIVKYLQTSKYCPMCN) form an RING-type zinc finger. A necessary for repressor activity region spans residues 86-247 (NIKIHETQPL…LSRWFGKPSP (162 aa)). Lys88 participates in a covalent cross-link: Glycyl lysine isopeptide (Lys-Gly) (interchain with G-Cter in SUMO2). Residues 150-255 (LPFSSFDHSK…SPLLLQYSVK (106 aa)) are required for the interaction with the KDM2B-SKP1 heterodimeric complex. The interval 167–255 (EQLSLCLERL…SPLLLQYSVK (89 aa)) is RING-finger and WD40-associated ubiquitin-like domain (RAWUL); sufficient for interaction with BCOR and BCORL1.

As to quaternary structure, interacts with BCORL1, forming heterodimers. The PCGF1-BCORL1 heterodimeric complex interacts with the KDM2B-SKP1 heterodimeric complex to form a homotetrameric polycomb repression complex 1 (PRC1.1). Component of the repressive BCOR complex containing a Polycomb group subcomplex at least composed of RYBP, RING1 and RNF2/RING2. Specifically interacts with BCOR, RING1 and RNF2/RING2. Component of a PRC1-like complex. Interacts with CBX6, CBX7 and CBX8. Interacts with DPPA4, NANOG, POU5F1 and RYBP.

The protein localises to the nucleus. Component of the Polycomb group (PcG) multiprotein BCOR complex, a complex required to maintain the transcriptionally repressive state of some genes, such as BCL6 and the cyclin-dependent kinase inhibitor, CDKN1A. Transcriptional repressor that may be targeted to the DNA by BCL6; this transcription repressor activity may be related to PKC signaling pathway. Represses CDKN1A expression by binding to its promoter, and this repression is dependent on the retinoic acid response element (RARE element). Promotes cell cycle progression and enhances cell proliferation as well. May have a positive role in tumor cell growth by down-regulating CDKN1A. Component of a Polycomb group (PcG) multiprotein PRC1-like complex, a complex class required to maintain the transcriptionally repressive state of many genes, including Hox genes, throughout development. PcG PRC1 complex acts via chromatin remodeling and modification of histones; it mediates monoubiquitination of histone H2A 'Lys-119', rendering chromatin heritably changed in its expressibility. Within the PRC1-like complex, regulates RNF2 ubiquitin ligase activity. Regulates the expression of DPPA4 and NANOG in the NT2 embryonic carcinoma cells. The chain is Polycomb group RING finger protein 1 (Pcgf1) from Mus musculus (Mouse).